The chain runs to 314 residues: Dihydropteroate synthase (314 aa).

Positions 10-294 constitute a Pterin-binding domain; the sequence is TVICGIINVT…DVASHRMAVE (285 aa). Asn-17 provides a ligand contact to Mg(2+). Residues Asp-91, Asn-110, Asp-201, Lys-237, and 282 to 284 each bind (7,8-dihydropterin-6-yl)methyl diphosphate; that span reads RVH.

It belongs to the DHPS family. As to quaternary structure, homodimer. The cofactor is Mg(2+).

The catalysed reaction is (7,8-dihydropterin-6-yl)methyl diphosphate + 4-aminobenzoate = 7,8-dihydropteroate + diphosphate. It functions in the pathway cofactor biosynthesis; tetrahydrofolate biosynthesis; 7,8-dihydrofolate from 2-amino-4-hydroxy-6-hydroxymethyl-7,8-dihydropteridine diphosphate and 4-aminobenzoate: step 1/2. Its activity is regulated as follows. Is potently inhibited by sulfonamides, with Ki values between 25 nM and 850 nM. Functionally, catalyzes the condensation of para-aminobenzoate (pABA) with 6-hydroxymethyl-7,8-dihydropterin diphosphate (DHPt-PP) to form 7,8-dihydropteroate, the immediate precursor of folate derivatives. Its function is as follows. Is the target for the sulfonamide group of antimicrobial drugs. Sulfonamide drugs act as pABA analogs, they inhibit the reaction by acting as alternative substrates, leading to a 'dead end' sulfa-pterin product. This Streptococcus pneumoniae (strain ATCC BAA-255 / R6) protein is Dihydropteroate synthase (sulA).